The following is a 282-amino-acid chain: Nucleotide-binding protein Ping_2894 (282 aa).

Position 8-15 (8-15 (GRSGSGKT)) interacts with ATP. A GTP-binding site is contributed by 56-59 (DIRN).

This sequence belongs to the RapZ-like family.

In terms of biological role, displays ATPase and GTPase activities. The chain is Nucleotide-binding protein Ping_2894 from Psychromonas ingrahamii (strain DSM 17664 / CCUG 51855 / 37).